A 678-amino-acid polypeptide reads, in one-letter code: Glutamate--cysteine ligase (678 aa).

The protein belongs to the glutamate--cysteine ligase type 3 family.

The catalysed reaction is L-cysteine + L-glutamate + ATP = gamma-L-glutamyl-L-cysteine + ADP + phosphate + H(+). The protein operates within sulfur metabolism; glutathione biosynthesis; glutathione from L-cysteine and L-glutamate: step 1/2. Its activity is regulated as follows. Feedback inhibition by glutathione. Functionally, catalyzes the ATP-dependent condensation of cysteine and glutamate to form the dipeptide gamma-glutamylcysteine (gamma-GC), the first and rate-limiting step in the production of glutathione (GSH). This chain is Glutamate--cysteine ligase (GSH1), found in Saccharomyces cerevisiae (strain ATCC 204508 / S288c) (Baker's yeast).